A 169-amino-acid polypeptide reads, in one-letter code: Probable glutathione peroxidase 2 (169 aa).

The active site involves C41.

It belongs to the glutathione peroxidase family. In terms of assembly, interacts with DJ1A. In terms of tissue distribution, expressed in leaves, stems, flowers, green siliques and roots.

It localises to the cytoplasm. It is found in the cytosol. Its subcellular location is the nucleus. It carries out the reaction 2 glutathione + H2O2 = glutathione disulfide + 2 H2O. Its function is as follows. May constitute a glutathione peroxidase-like protective system against oxidative stresses. The protein is Probable glutathione peroxidase 2 (GPX2) of Arabidopsis thaliana (Mouse-ear cress).